We begin with the raw amino-acid sequence, 328 residues long: tRNA U34 carboxymethyltransferase (328 aa).

Carboxy-S-adenosyl-L-methionine is bound by residues K91, W105, K110, G130, 181 to 182, M196, Y200, and R315; that span reads IE.

The protein belongs to the class I-like SAM-binding methyltransferase superfamily. CmoB family. As to quaternary structure, homotetramer.

The enzyme catalyses carboxy-S-adenosyl-L-methionine + 5-hydroxyuridine(34) in tRNA = 5-carboxymethoxyuridine(34) in tRNA + S-adenosyl-L-homocysteine + H(+). Functionally, catalyzes carboxymethyl transfer from carboxy-S-adenosyl-L-methionine (Cx-SAM) to 5-hydroxyuridine (ho5U) to form 5-carboxymethoxyuridine (cmo5U) at position 34 in tRNAs. The sequence is that of tRNA U34 carboxymethyltransferase from Pectobacterium carotovorum subsp. carotovorum (strain PC1).